Here is a 303-residue protein sequence, read N- to C-terminus: Coenzyme PQQ synthesis protein B (303 aa).

Belongs to the PqqB family.

It functions in the pathway cofactor biosynthesis; pyrroloquinoline quinone biosynthesis. Its function is as follows. May be involved in the transport of PQQ or its precursor to the periplasm. The protein is Coenzyme PQQ synthesis protein B of Pseudomonas syringae pv. tomato (strain ATCC BAA-871 / DC3000).